We begin with the raw amino-acid sequence, 322 residues long: Undecaprenyl-phosphate 4-deoxy-4-formamido-L-arabinose transferase (322 aa).

At 1–235 (MFEIHPVKKV…TCLTTTPLRM (235 aa)) the chain is on the cytoplasmic side. The chain crosses the membrane as a helical span at residues 236–256 (LSLLGSIIAIGGFSIAVLLVI). Topologically, residues 257–269 (LRLTFGPQWAAEG) are periplasmic. Residues 270 to 290 (VFMLFAVLFTFIGAQFIGMGL) traverse the membrane as a helical segment. Topologically, residues 291–322 (LGEYIGRIYTDVRARPRYFVQQVIRPSSKENE) are cytoplasmic.

The protein belongs to the glycosyltransferase 2 family.

The protein localises to the cell inner membrane. The catalysed reaction is UDP-4-deoxy-4-formamido-beta-L-arabinose + di-trans,octa-cis-undecaprenyl phosphate = 4-deoxy-4-formamido-alpha-L-arabinopyranosyl di-trans,octa-cis-undecaprenyl phosphate + UDP. It participates in glycolipid biosynthesis; 4-amino-4-deoxy-alpha-L-arabinose undecaprenyl phosphate biosynthesis; 4-amino-4-deoxy-alpha-L-arabinose undecaprenyl phosphate from UDP-4-deoxy-4-formamido-beta-L-arabinose and undecaprenyl phosphate: step 1/2. Its pathway is bacterial outer membrane biogenesis; lipopolysaccharide biosynthesis. Functionally, catalyzes the transfer of 4-deoxy-4-formamido-L-arabinose from UDP to undecaprenyl phosphate. The modified arabinose is attached to lipid A and is required for resistance to polymyxin and cationic antimicrobial peptides. This chain is Undecaprenyl-phosphate 4-deoxy-4-formamido-L-arabinose transferase, found in Escherichia coli O45:K1 (strain S88 / ExPEC).